A 206-amino-acid chain; its full sequence is Ribonuclease HII (206 aa).

The RNase H type-2 domain maps to 18 to 206 (GRVAGVDEVG…PVREWLEANS (189 aa)). Positions 24, 25, and 116 each coordinate a divalent metal cation.

Belongs to the RNase HII family. Requires Mn(2+) as cofactor. The cofactor is Mg(2+).

The protein localises to the cytoplasm. It carries out the reaction Endonucleolytic cleavage to 5'-phosphomonoester.. Functionally, endonuclease that specifically degrades the RNA of RNA-DNA hybrids. The sequence is that of Ribonuclease HII from Shewanella amazonensis (strain ATCC BAA-1098 / SB2B).